The following is a 310-amino-acid chain: Zinc transporter ZIP9 (310 aa).

The next 8 membrane-spanning stretches (helical) occupy residues 7 to 27 (ISLL…IPLA), 35 to 55 (LKLI…AVII), 108 to 128 (ACIG…DQIG), 148 to 168 (ITTT…LGAA), 178 to 198 (LIVF…LVSF), 212 to 232 (HLLV…LGLS), 246 to 266 (GVAM…HVLP), and 289 to 309 (VEVV…VGHH).

Belongs to the ZIP transporter (TC 2.A.5) family. As to expression, expressed in brain, liver, ovary, and testis.

It is found in the golgi apparatus. The protein localises to the trans-Golgi network membrane. The protein resides in the cell membrane. Its subcellular location is the cytoplasm. It localises to the perinuclear region. It is found in the mitochondrion. The protein localises to the nucleus. It carries out the reaction Zn(2+)(in) = Zn(2+)(out). Its function is as follows. Has dual functions as a membrane-bound androgen receptor and as an androgen-dependent zinc transporter both of which are mediated through G protein activation and are required for the androgen-dependent apoptotic response. Upon androgen binding, mediates apoptosis by directly activating a stimulatory G protein that leads to increased cAMP levels and MAP kinase activity and which is accompanied by increased intracellular free zinc levels. This Micropogonias undulatus (Atlantic croaker) protein is Zinc transporter ZIP9.